A 169-amino-acid polypeptide reads, in one-letter code: DNA damage-inducible transcript 3 protein (169 aa).

Positions 10-18 (FGTLSSWEL) are interaction with TRIB3. An N-terminal region spans residues 10-26 (FGTLSSWELEAWYEDLQ). Serine 14, serine 15, serine 30, and serine 31 each carry phosphoserine; by CK2. Positions 32 to 139 (DENGGTYVSP…KVAQLAEENE (108 aa)) are disordered. Positions 74–89 (TSTSQSPHSPDSSQSS) are enriched in low complexity. Residues serine 79 and serine 82 each carry the phosphoserine; by MAPK14 modification. The 64-residue stretch at 99–162 (QGRTRKRKQS…EATRRALIDR (64 aa)) folds into the bZIP domain. The interval 101 to 130 (RTRKRKQSGHSPARAGKQRMKEKEQENERK) is basic motif. Over residues 119 to 139 (RMKEKEQENERKVAQLAEENE) the composition is skewed to basic and acidic residues. The segment at 134–148 (LAEENERLKQEIERL) is leucine-zipper.

This sequence belongs to the bZIP family. As to quaternary structure, heterodimer. Interacts with TCF7L2/TCF4, EP300/P300, HDAC1, HDAC5 and HDAC6. Interacts with TRIB3 which blocks its association with EP300/P300. Interacts with FOXO3, CEBPB and ATF4. Interacts with isoform AltDDIT3 of DDIT3. Post-translationally, ubiquitinated, leading to its degradation by the proteasome. In terms of processing, phosphorylation at serine residues by MAPK14 enhances its transcriptional activation activity while phosphorylation at serine residues by CK2 inhibits its transcriptional activation activity.

It is found in the cytoplasm. Its subcellular location is the nucleus. In terms of biological role, multifunctional transcription factor in endoplasmic reticulum (ER) stress response. Plays an essential role in the response to a wide variety of cell stresses and induces cell cycle arrest and apoptosis in response to ER stress. Plays a dual role both as an inhibitor of CCAAT/enhancer-binding protein (C/EBP) function and as an activator of other genes. Acts as a dominant-negative regulator of C/EBP-induced transcription: dimerizes with members of the C/EBP family, impairs their association with C/EBP binding sites in the promoter regions, and inhibits the expression of C/EBP regulated genes. Positively regulates the transcription of TRIB3, IL6, IL8, IL23, TNFRSF10B/DR5, PPP1R15A/GADD34, BBC3/PUMA, BCL2L11/BIM and ERO1L. Negatively regulates; expression of BCL2 and MYOD1, ATF4-dependent transcriptional activation of asparagine synthetase (ASNS), CEBPA-dependent transcriptional activation of hepcidin (HAMP) and CEBPB-mediated expression of peroxisome proliferator-activated receptor gamma (PPARG). Together with ATF4, mediates ER-mediated cell death by promoting expression of genes involved in cellular amino acid metabolic processes, mRNA translation and the unfolded protein response (UPR) in response to ER stress. Inhibits the canonical Wnt signaling pathway by binding to TCF7L2/TCF4, impairing its DNA-binding properties and repressing its transcriptional activity. Plays a regulatory role in the inflammatory response through the induction of caspase-11 (CASP4/CASP11) which induces the activation of caspase-1 (CASP1) and both these caspases increase the activation of pro-IL1B to mature IL1B which is involved in the inflammatory response. Acts as a major regulator of postnatal neovascularization through regulation of endothelial nitric oxide synthase (NOS3)-related signaling. This chain is DNA damage-inducible transcript 3 protein (DDIT3), found in Homo sapiens (Human).